The chain runs to 129 residues: uncharacterized protein (129 aa).

Residues 52-94 (NGDEESQDDWLNDLLKSDGDGGKAGPVDPSHPMETTTTDHSSQ) are disordered. A compositionally biased stretch (acidic residues) spans 53 to 62 (GDEESQDDWL). Polar residues predominate over residues 84–94 (METTTTDHSSQ).

This is an uncharacterized protein from Caenorhabditis elegans.